Consider the following 329-residue polypeptide: DNA-directed RNA polymerase subunit alpha (329 aa).

An alpha N-terminal domain (alpha-NTD) region spans residues 1-234; that stretch reads MQGSVTEFLK…EQLDAFVELR (234 aa). An alpha C-terminal domain (alpha-CTD) region spans residues 248 to 329; the sequence is FDPILLRPVD…WPPASLADDL (82 aa).

It belongs to the RNA polymerase alpha chain family. Homodimer. The RNAP catalytic core consists of 2 alpha, 1 beta, 1 beta' and 1 omega subunit. When a sigma factor is associated with the core the holoenzyme is formed, which can initiate transcription.

It catalyses the reaction RNA(n) + a ribonucleoside 5'-triphosphate = RNA(n+1) + diphosphate. DNA-dependent RNA polymerase catalyzes the transcription of DNA into RNA using the four ribonucleoside triphosphates as substrates. The polypeptide is DNA-directed RNA polymerase subunit alpha (Shewanella sp. (strain ANA-3)).